The following is a 975-amino-acid chain: Glycine dehydrogenase (decarboxylating) (975 aa).

Position 723 is an N6-(pyridoxal phosphate)lysine (Lys-723).

The protein belongs to the GcvP family. The glycine cleavage system is composed of four proteins: P, T, L and H. Requires pyridoxal 5'-phosphate as cofactor.

It catalyses the reaction N(6)-[(R)-lipoyl]-L-lysyl-[glycine-cleavage complex H protein] + glycine + H(+) = N(6)-[(R)-S(8)-aminomethyldihydrolipoyl]-L-lysyl-[glycine-cleavage complex H protein] + CO2. Its function is as follows. The glycine cleavage system catalyzes the degradation of glycine. The P protein binds the alpha-amino group of glycine through its pyridoxal phosphate cofactor; CO(2) is released and the remaining methylamine moiety is then transferred to the lipoamide cofactor of the H protein. In Burkholderia multivorans (strain ATCC 17616 / 249), this protein is Glycine dehydrogenase (decarboxylating).